The chain runs to 579 residues: Cytochrome P450 monooxygenase ORF6 (579 aa).

N2 carries N-linked (GlcNAc...) asparagine glycosylation. A helical transmembrane segment spans residues 7-29 (PLGSFVGTTLLLFILYKLVKLAY). N194 and N390 each carry an N-linked (GlcNAc...) asparagine glycan. C512 is a heme binding site.

This sequence belongs to the cytochrome P450 family. It depends on heme as a cofactor.

It is found in the membrane. The protein operates within sesquiterpene biosynthesis. Its function is as follows. Cytochrome P450 monooxygenase; part of the gene cluster that mediates the biosynthesis of PR-toxin, a bicyclic sesquiterpene belonging to the eremophilane class and acting as a mycotoxin. The first step of the pathway is catalyzed by the aristolochene synthase which performs the cyclization of trans,trans-farnesyl diphosphate (FPP) to the bicyclic sesquiterpene aristolochene. Following the formation of aristolochene, the non-oxygenated aristolochene is converted to the trioxygenated intermediate eremofortin B, via 7-epi-neopetasone. This conversion appears to involve three enzymes, a hydroxysterol oxidase-like enzyme, the quinone-oxidase prx3 that forms the quinone-type-structure in the bicyclic nucleus of aristolochene with the C8-oxo group and the C-3 hydroxyl group, and the P450 monooxygenase ORF6 that introduces the epoxide at the double bond between carbons 1 and 2. No monoxy or dioxy-intermediates have been reported to be released to the broth, so these three early oxidative reactions may be coupled together. Eremofortin B is further oxidized by another P450 monooxygenase, that introduces a second epoxide between carbons 7 and 11 prior to acetylation to eremofortin A by the acetyltransferase ORF8. The second epoxidation may be performed by a second P450 monooxygenase. After the acetylation step, eremofortin A is converted to eremofortin C and then to PR-toxin. First the conversion of eremofortin A to eremofortin C proceeds by oxidation of the side chain of the molecule at C-12 and is catalyzed by the short-chain oxidoreductase prx1. The cytochrome P450 monooxygenase ORF6 is probably also involved in this step. The primary alcohol formed at C-12 is finally oxidized by the short-chain alcohol dehydrogenase prx4 that forms PR-toxin. The protein is Cytochrome P450 monooxygenase ORF6 of Penicillium roqueforti (strain FM164).